The chain runs to 436 residues: 3-ketoacyl-CoA thiolase (436 aa).

Cysteine 99 (acyl-thioester intermediate) is an active-site residue. Residues histidine 392 and cysteine 422 each act as proton acceptor in the active site.

This sequence belongs to the thiolase-like superfamily. Thiolase family. As to quaternary structure, heterotetramer of two alpha chains (FadJ) and two beta chains (FadI).

It localises to the cytoplasm. The enzyme catalyses an acyl-CoA + acetyl-CoA = a 3-oxoacyl-CoA + CoA. It participates in lipid metabolism; fatty acid beta-oxidation. In terms of biological role, catalyzes the final step of fatty acid oxidation in which acetyl-CoA is released and the CoA ester of a fatty acid two carbons shorter is formed. The polypeptide is 3-ketoacyl-CoA thiolase (Enterobacter sp. (strain 638)).